The chain runs to 145 residues: Sec-independent protein translocase protein TatB (145 aa).

Residues 1-21 form a helical membrane-spanning segment; the sequence is MLDVGMTELLCFAIIAILVLG.

It belongs to the TatB family. In terms of assembly, the Tat system comprises two distinct complexes: a TatABC complex, containing multiple copies of TatA, TatB and TatC subunits, and a separate TatA complex, containing only TatA subunits. Substrates initially bind to the TatABC complex, which probably triggers association of the separate TatA complex to form the active translocon.

It localises to the cell inner membrane. Part of the twin-arginine translocation (Tat) system that transports large folded proteins containing a characteristic twin-arginine motif in their signal peptide across membranes. Together with TatC, TatB is part of a receptor directly interacting with Tat signal peptides. TatB may form an oligomeric binding site that transiently accommodates folded Tat precursor proteins before their translocation. In Acinetobacter baumannii (strain ATCC 17978 / DSM 105126 / CIP 53.77 / LMG 1025 / NCDC KC755 / 5377), this protein is Sec-independent protein translocase protein TatB.